The chain runs to 428 residues: MEILMASSNLIKQLQERGLVAQVTDEEALAERLAQGPIALYCGFDPTADSLHLGHLVPLLCLKRFQQAGHKPVALVGGATGLIGDPSFKAAERKLNTEDTVQEWVDKIRKQVAPFLDFDCGDNSAIAANNYDWFGGMNVLTFLRDIGKHFSVNQMINKEAVKQRLNRDDQGISFTEFSYNLLQGYDFACLNKLHGVTLQIGGSDQWGNITSGIDLTRRLHQNQVFGLTVPLITKADGTKFGKTEGGAVWLDPKKTSPYKFYQFWINTADADVYRFLKFFTFMDIAEINALEEEDKNSGKAPRAQYVLAEQVTRLVHGEEGLVAAKRITESLFNGNLSDLSEADFEQLAQDGVPMIEMEKGADLMQALVDSELQPSRGQARKTIASNAVTINGEKQSDPEYFFQDSDILFGRYTLLRRGKKNYCLICWK.

Y41 contributes to the L-tyrosine binding site. A 'HIGH' region motif is present at residues P46–H55. 2 residues coordinate L-tyrosine: Y179 and Q183. The 'KMSKS' region signature appears at K239–T243. K242 is an ATP binding site. The 58-residue stretch at A361–G418 folds into the S4 RNA-binding domain.

The protein belongs to the class-I aminoacyl-tRNA synthetase family. TyrS type 1 subfamily. As to quaternary structure, homodimer.

The protein localises to the cytoplasm. The catalysed reaction is tRNA(Tyr) + L-tyrosine + ATP = L-tyrosyl-tRNA(Tyr) + AMP + diphosphate + H(+). In terms of biological role, catalyzes the attachment of tyrosine to tRNA(Tyr) in a two-step reaction: tyrosine is first activated by ATP to form Tyr-AMP and then transferred to the acceptor end of tRNA(Tyr). The protein is Tyrosine--tRNA ligase of Citrobacter koseri (strain ATCC BAA-895 / CDC 4225-83 / SGSC4696).